Reading from the N-terminus, the 299-residue chain is S-formylglutathione hydrolase (299 aa).

Cu cation-binding residues include M1 and H140. Residues S161, D241, and H276 each act as charge relay system in the active site.

Belongs to the esterase D family. Monomer.

The protein localises to the cytoplasm. It catalyses the reaction S-formylglutathione + H2O = formate + glutathione + H(+). Serine hydrolase involved in the detoxification of formaldehyde. In Saccharomyces cerevisiae (strain ATCC 204508 / S288c) (Baker's yeast), this protein is S-formylglutathione hydrolase.